The following is a 565-amino-acid chain: MGDNGDNKELKQKLNFSYSEEEQEDEGQKEAQESKKVQYHTPERCGHQDSEAKFTPPRTPLNHVCELSTPQVKDRASPDQGLRTPVSRPHTRPETPAPPDKSKPPPHCESPFTPRGHSSQSVISTGKLPSRGSKHLRLTPGPLTDEMTSLALVNINPFTPESYRRQFLKSNGKRKTRRDLEEAGPEEGKVEKGLPAKRCVLRETNMACRYEKEFLEVEKIGVGEFGTVYKCIKRLDGCVYAIKRSTKPVSGLSDENLAMHEVYAHSVLGHHPHVVRYYSSWAEDDHMMIQNEYCNGGSLQAAISENAKSGNHFQEPKLKDILLQISLGLKYIHNYGMVHMDIKPSNIFICHKIPSDSPVVPEEAENEADWFLSANVTYKIGDLGHVTSISEPQVEEGDSRFLAKEILQENYQHLPKADIFALGLTIAVAAGAEALPTNGTSWHHIREGQLPNIPQDLSKEFYNLLKDMIDPDPVARPSAAALTRSRVLCPSLGRTEELQQQLNLEKFKTATLERELKEVQRAQSSKEGQSSPGVTGTHTGSRSTRRLVGGKSAKSSSFTWGQSSP.

Basic and acidic residues-rich tracts occupy residues 1–12 and 26–52; these read MGDNGDNKELKQ and EGQK…DSEA. Disordered regions lie at residues 1–142 and 169–189; these read MGDN…TPGP and KSNG…EEGK. S77 is modified (phosphoserine). A Nuclear localization signal motif is present at residues 173 to 175; the sequence is KRK. Residues 178-189 are compositionally biased toward basic and acidic residues; it reads RDLEEAGPEEGK. A Protein kinase domain is found at 214 to 492; the sequence is FLEVEKIGVG…TRSRVLCPSL (279 aa). ATP-binding positions include 220-228 and K243; that span reads IGVGEFGTV. Residues 317–331 carry the Nuclear export signal motif; it reads KLKDILLQISLGLKY. D341 acts as the Proton acceptor in catalysis. The Mg(2+) site is built by N346 and D382. Positions 495 to 521 form a coiled coil; sequence TEELQQQLNLEKFKTATLERELKEVQR. Residues 518 to 565 are disordered; it reads EVQRAQSSKEGQSSPGVTGTHTGSRSTRRLVGGKSAKSSSFTWGQSSP. Composition is skewed to polar residues over residues 521 to 534 and 553 to 565; these read RAQS…SPGV and AKSS…QSSP.

It belongs to the protein kinase superfamily. Ser/Thr protein kinase family. WEE1 subfamily. Phosphorylation leads to increase its activity. In terms of tissue distribution, ovary-specific.

It is found in the nucleus. The catalysed reaction is L-tyrosyl-[protein] + ATP = O-phospho-L-tyrosyl-[protein] + ADP + H(+). Functionally, oocyte-specific protein tyrosine kinase that phosphorylates and inhibits CDK1 and acts as a key regulator of meiosis during both prophase I and metaphase II. Required to maintain meiotic arrest in oocytes during the germinal vesicle (GV) stage, a long period of quiescence at dictyate prophase I, by phosphorylating CDK1 at 'Tyr-15', leading to inhibit CDK1 activity and prevent meiotic reentry. Also required for metaphase II exit during egg activation by phosphorylating CDK1 at 'Tyr-15', to ensure exit from meiosis in oocytes and promote pronuclear formation. The sequence is that of Wee1-like protein kinase 2 (WEE2) from Sus scrofa (Pig).